The sequence spans 240 residues: Insulin-like growth factor-binding protein 3 receptor (240 aa).

A signal peptide spans 1–38 (MGSCQAGHNLHLCLAHHPPLVCATLILLLLGLSGLGLG). Residues 39 to 204 (GFLLTHTTGL…SEELALCGSR (166 aa)) are Extracellular-facing. N-linked (GlcNAc...) asparagine glycosylation occurs at Asn-167. Residues 205 to 225 (VLGLGFFLVLLCGLLCCTTAV) traverse the membrane as a helical segment. Residues 226–240 (CFHPRPEFHWSRTRL) lie on the Cytoplasmic side of the membrane.

Interacts with IGFBP3. Interacts with CASP8.

It localises to the cell membrane. In terms of biological role, cell death receptor specific for IGFBP3, may mediate caspase-8-dependent apoptosis upon ligand binding. The protein is Insulin-like growth factor-binding protein 3 receptor (Tmem219) of Mus musculus (Mouse).